A 1108-amino-acid chain; its full sequence is TBC1 domain family member 8B (1108 aa).

GRAM domains lie at 143–210 (LRFE…ERTS) and 283–351 (QSFR…ELPD). A Rab-GAP TBC domain is found at 469–656 (GVPETLRGEL…NVVDCFFYDG (188 aa)). Residues 822 to 857 (HSRSLARSAFHLLDENGDGLVNFKEFICGLDILYNR) enclose the EF-hand domain. Residues Asp835, Asn837, Asp839, and Glu846 each coordinate Ca(2+). Residues 961-1059 (GRKLQDSSPQ…PTDTPSSPCT (99 aa)) are disordered. Residues 967–998 (SSPQKTPQTTPTSTSQPESSPTKPTSPESETP) show a composition bias toward low complexity. Residues 1010 to 1024 (SPVSQHETAPSHSDI) are compositionally biased toward polar residues. Over residues 1025-1057 (TPNSTSHPSTPTSSPTETSSPVLDTPTDTPSSP) the composition is skewed to low complexity.

The protein localises to the cytoplasm. The protein resides in the cytosol. In terms of biological role, involved in vesicular recycling, probably as a GTPase-activating protein for Rab family protein(s). This is TBC1 domain family member 8B (tbc1d8b) from Danio rerio (Zebrafish).